The primary structure comprises 432 residues: Hexane cyclase pydB (432 aa).

Positions 1–20 (MMHQSLGLGLVVFVAAPVVA) are cleaved as a signal peptide. 4 N-linked (GlcNAc...) asparagine glycosylation sites follow: Asn-59, Asn-78, Asn-153, and Asn-308.

Belongs to the Diels-Alderase family.

Its pathway is mycotoxin biosynthesis. Hexane cyclase; part of the gene cluster that mediates the biosynthesis of pyrrocidines, fungal natural products containing a macrocyclic para-cyclophane connected to a decahydrofluorene ring system that show potent antibiotic activities toward Gram-negative bacteria. Within the pathway, pydB functions synergistically with pydE, pydX and pydZ to form the cyclophane. The pathway begins with the PKS-NRPS pydA which, with the help of the trans-enoyl reductase pydC, synthesizes the polyketide-tyrosyl acyl thioester product which can be reductively off-loaded by the terminal reductase (R) domain in pydA. The alpha/beta hydrolase pydG is then required to catalyze the subsequent Knoevenagel condensation that affords the 3-pyrrolin-2-one ring, whereas the four proteins pydB, pydE, pydX and pydZ then function synergistically to form the cyclophane. PydB and the membrane-bound pydX and pydZ are lipid-binding proteins that can sequester and mold the pdyG product into the inverse S-shape. Binding of the medium chain reductase pydE to the complex would trigger the cascade oxidative cyclization. PydY is involved the Diels-Alder cycloaddition that forms the decahydrofluorene core. Additional non-enzymatic hydroxylation yields pyrrocidine A2 which can be further reduced into pyrrocidine B by an endogenous reductase. The protein is Hexane cyclase pydB of Acremonium sp.